The primary structure comprises 186 residues: Putative CTD phosphatase-like protein 355R (186 aa).

An FCP1 homology domain is found at 2 to 182 (ENNKKKLILL…TELLKVQKTL (181 aa)).

It belongs to the IIV-6 355R family.

In terms of biological role, may function as a phosphatase. This Aedes vexans (Inland floodwater mosquito) protein is Putative CTD phosphatase-like protein 355R.